The sequence spans 253 residues: Triosephosphate isomerase (253 aa).

9 to 11 (NWK) lines the substrate pocket. H95 (electrophile) is an active-site residue. E167 functions as the Proton acceptor in the catalytic mechanism. Substrate is bound by residues G173, S213, and 234–235 (GG). A Phosphoserine modification is found at S213.

The protein belongs to the triosephosphate isomerase family. As to quaternary structure, homodimer.

The protein localises to the cytoplasm. The catalysed reaction is D-glyceraldehyde 3-phosphate = dihydroxyacetone phosphate. Its pathway is carbohydrate biosynthesis; gluconeogenesis. It participates in carbohydrate degradation; glycolysis; D-glyceraldehyde 3-phosphate from glycerone phosphate: step 1/1. Involved in the gluconeogenesis. Catalyzes stereospecifically the conversion of dihydroxyacetone phosphate (DHAP) to D-glyceraldehyde-3-phosphate (G3P). This chain is Triosephosphate isomerase, found in Bacillus velezensis (strain DSM 23117 / BGSC 10A6 / LMG 26770 / FZB42) (Bacillus amyloliquefaciens subsp. plantarum).